Here is a 295-residue protein sequence, read N- to C-terminus: Nucleotide-binding protein MCA0739 (295 aa).

8–15 (GFSGSGKS) is a binding site for ATP. 60-63 (DARN) contributes to the GTP binding site.

The protein belongs to the RapZ-like family.

Displays ATPase and GTPase activities. The protein is Nucleotide-binding protein MCA0739 of Methylococcus capsulatus (strain ATCC 33009 / NCIMB 11132 / Bath).